Here is a 532-residue protein sequence, read N- to C-terminus: Zinc finger protein 350 (532 aa).

Positions 8–79 (ITLEDVAVDF…EDGIHSGACS (72 aa)) constitute a KRAB domain. 8 C2H2-type zinc fingers span residues 206 to 228 (HVCS…QVMH), 234 to 256 (HRCS…QRTH), 262 to 284 (YECP…QKTH), 290 to 312 (YICS…QRIH), 318 to 340 (YICN…QRFH), 346 to 368 (FVCS…QRIH), 374 to 396 (FECS…QRTH), and 402 to 424 (YGCN…KRIH). Positions 427 to 443 (EKQEAAKVENPPAERHS) are enriched in basic and acidic residues. Residues 427–465 (EKQEAAKVENPPAERHSSLHTSDVMQEKNSANGATTQVP) form a disordered region. Residues 445–465 (LHTSDVMQEKNSANGATTQVP) show a composition bias toward polar residues.

It belongs to the krueppel C2H2-type zinc-finger protein family. Interacts with BRCA1. Interacts with RNF11. In terms of tissue distribution, widely expressed.

It localises to the nucleus. The protein localises to the nucleus matrix. Transcriptional repressor. Binds to a specific sequence, 5'-GGGxxxCAGxxxTTT-3', within GADD45 intron 3. The polypeptide is Zinc finger protein 350 (ZNF350) (Homo sapiens (Human)).